The primary structure comprises 347 residues: MKKKTVLYKYPMMAQMSYDQQELLDQLPHLDFSHFHSAFKSGFNASINAMEEKALRNAALYFPAEDVKMLGDMGGLVARMFYKASDERGAVLLDIFVFAFITDDLLEKPELRRHNENYRKLQILILKLVRNESFPEKDYPEWRNLITFSRPIFSKFQNLASPTLFHRFAFQYQEYLQGVDWEASIRSPNPVPDIETCKHVKRHLSGGQVAFVLAEFSREIEVPIAVRAHPGMQKFCSLASDLASYDNDIFSLKKEVRDGVVCNTILFLYLHGITKSLQAAVDRVVHMRKQTEREIISLINDLPQFGRDNAVAQEYISAITRCIGGNFEWCSKSTRYHVASSLPHSKL.

Positions 103, 247, 251, and 255 each coordinate Mg(2+). The short motif at 103-107 (DDLLE) is the D(D/E)XX(D/E) motif element. Residues 247–255 (NDIFSLKKE) carry the NSE motif motif. A WxxxxxRY motif motif is present at residues 329–336 (WCSKSTRY).

The protein belongs to the terpene synthase family. Mg(2+) is required as a cofactor.

In terms of biological role, terpene synthase that may be involved in the production of volatile terpenoids. Does not show detectable terpene products with either farnesyl diphosphate (FPP) or geranyl diphosphate (GPP). P.polycephalum has a unique biology and these volatile terpenoids could function in internal communication of P.polycephalum, to mark the territory that have been explored, or they may be involved in chemotaxis. The polypeptide is Terpene synthase 2 (Physarum polycephalum (Slime mold)).